The chain runs to 471 residues: MSVVHHLPPGWLLDHLSFINKVNYQLCQHQESFCSKNNPTSSVYMDSLQLDPGSPFGAPAMCFAPDFTTVSGNDDEGSCEVITEKYVFRSELFNVTKPYIVPAVHKERQQSNKNENLVTDYKQEVSVSVGKKRKRCIAFNQGELDAMEYHTKIRELILDGSSKLIQEGLRSGFLYPLVEKQDGSSGCITLPLDACNLSELCEMAKHLPSLNEMELQTLQLMGDDVSVIELDLSSQIIENNSSFSKMITLMGQKYLLPPQSSFLLSDISCMQPLLNCGKTFDAIVIDPPWENKSVKRSNRYSSLSPQQIKRMPIPKLAAADCLIVTWVTNRQKHLCFVKEELYPSWSVEVVAEWYWVKITNSGEFVFPLDSPHKKPYECLVLGRVKEKTPLALRNPDVRIPPVPDQKLIVSVPCVLHSHKPPLTEVLRDYIKPGGQCLELFARNLQPGWMSWGNEVLKFQHMDYFIALESGC.

Belongs to the MT-A70-like family.

It is found in the nucleus. It catalyses the reaction a 2'-O-methyladenosine in U2 snRNA + S-adenosyl-L-methionine = an N(6)-methyl-2'-O-methyladenosine in U2 snRNA + S-adenosyl-L-homocysteine + H(+). It carries out the reaction a 2'-deoxyadenosine in DNA + S-adenosyl-L-methionine = an N(6)-methyl-2'-deoxyadenosine in DNA + S-adenosyl-L-homocysteine + H(+). Its function is as follows. N(6)-adenine-specific methyltransferase that can methylate both RNAs and DNA. Acts as a N(6)-adenine-specific RNA methyltransferase by catalyzing formation of N6,2'-O-dimethyladenosine (m6A(m)) on internal positions of U2 small nuclear RNA (snRNA): methylates the 6th position of adenine residues with a pre-deposited 2'-O-methylation. Internal m6A(m) methylation of snRNAs regulates RNA splicing. Also able to act as a N(6)-adenine-specific DNA methyltransferase by mediating methylation of DNA on the 6th position of adenine (N(6)-methyladenosine). The existence of N(6)-methyladenosine (m6A) on DNA is however unclear in mammals, and additional evidences are required to confirm the role of the N(6)-adenine-specific DNA methyltransferase activity of METTL4 in vivo. Acts as a regulator of mitochondrial transcript levels and mitochondrial DNA (mtDNA) copy number by mediating mtDNA N(6)-methylation: m6A on mtDNA reduces transcription by repressing TFAM DNA-binding and bending. N(6)-methyladenosine deposition by METTL4 regulates Polycomb silencing by triggering ubiquitination and degradation of sensor proteins ASXL1 and MPND, leading to inactivation of the PR-DUB complex and subsequent preservation of Polycomb silencing. This chain is N(6)-adenine-specific methyltransferase METTL4, found in Mus musculus (Mouse).